The sequence spans 333 residues: Neuropeptides B/W receptor type 2 (333 aa).

Topologically, residues Met1–Tyr45 are extracellular. 3 N-linked (GlcNAc...) asparagine glycosylation sites follow: Asn24, Asn29, and Asn34. The helical transmembrane segment at Val46–Val69 threads the bilayer. Topologically, residues Ile70–Thr80 are cytoplasmic. The chain crosses the membrane as a helical span at residues Asn81 to His105. At Leu106 to Val120 the chain is on the extracellular side. Cys117 and Cys197 are disulfide-bonded. A helical membrane pass occupies residues Leu121–Val140. The Cytoplasmic portion of the chain corresponds to Asp141 to Val165. The helical transmembrane segment at Ala166–Ala185 threads the bilayer. Residues Gly186–Ala211 lie on the Extracellular side of the membrane. The chain crosses the membrane as a helical span at residues Ser212–Thr233. The Cytoplasmic segment spans residues Asp234–Lys257. Residues Val258–Val282 form a helical membrane-spanning segment. Residues Ala283–Pro292 lie on the Extracellular side of the membrane. A helical membrane pass occupies residues Leu293 to Ala307. Topologically, residues Asn308 to Cys333 are cytoplasmic.

The protein belongs to the G-protein coupled receptor 1 family. As to expression, detected at high levels in caudate nucleus, hippocampus and amygdala; at moderate levels in the adult brain, thalamus, parietal cortex, pituitary gland, adrenal gland and lymph nodes.

It is found in the cell membrane. In terms of biological role, interacts specifically with a number of opioid ligands. Receptor for neuropeptides B and W, which may be involved in neuroendocrine system regulation, food intake and the organization of other signals. This chain is Neuropeptides B/W receptor type 2 (NPBWR2), found in Homo sapiens (Human).